The following is a 385-amino-acid chain: m7GpppN-mRNA hydrolase (385 aa).

Residues 95-226 (MGVPTYGAII…KLGLAPNKFF (132 aa)) enclose the Nudix hydrolase domain. The short motif at 129–150 (GKVNKEEAPHDCAAREVFEETG) is the Nudix box element. The Mn(2+) site is built by glutamate 144 and glutamate 148. 5 positions are modified to phosphoserine: serine 246, serine 247, serine 249, serine 276, and serine 284. Residues 247–266 (SDSDNGFSSTGSTPAKPTVE) are disordered. Low complexity predominate over residues 249 to 259 (SDNGFSSTGST).

The protein belongs to the Nudix hydrolase family. DCP2 subfamily. As to quaternary structure, found in a mRNA decay complex with LSM1, LSM3, LSM4, EXOSC2, EXOSC4, EXOSC10, PARN, XRN1, CNOT6, UPF1, UPF2 and UPF3B. Forms a complex with DCP1A, EDC3, DDX6 and EDC4/HEDLS, within this complex directly interacts with EDC4/HEDLS. Interacts with DPC1B, UPF1, UPF2 and UPF3B. Associates with polysomes. Interacts (via N-terminus and C-terminus) with TRIM21 (via N-terminus and C-terminus). Interacts with LIMD1, WTIP and AJUBA. Interacts with DDX17 in an RNA-dependent manner. Interacts with ZC3HAV1. Interacts with APOBEC3G in an RNA-dependent manner. Interacts with ZFP36L1 (via N-terminus). Interacts with NBDY. Requires Mn(2+) as cofactor. Mg(2+) is required as a cofactor.

It localises to the cytoplasm. Its subcellular location is the P-body. The protein resides in the nucleus. It carries out the reaction a 5'-end (N(7)-methyl 5'-triphosphoguanosine)-ribonucleoside in mRNA + H2O = N(7)-methyl-GDP + a 5'-end phospho-ribonucleoside in mRNA + 2 H(+). Functionally, decapping metalloenzyme that catalyzes the cleavage of the cap structure on mRNAs. Removes the 7-methyl guanine cap structure from mRNA molecules, yielding a 5'-phosphorylated mRNA fragment and 7m-GDP. Necessary for the degradation of mRNAs, both in normal mRNA turnover and in nonsense-mediated mRNA decay. Plays a role in replication-dependent histone mRNA degradation. Has higher activity towards mRNAs that lack a poly(A) tail. Has no activity towards a cap structure lacking an RNA moiety. The presence of a N(6)-methyladenosine methylation at the second transcribed position of mRNAs (N(6),2'-O-dimethyladenosine cap; m6A(m)) provides resistance to DCP2-mediated decapping. Blocks autophagy in nutrient-rich conditions by repressing the expression of ATG-related genes through degradation of their transcripts. The protein is m7GpppN-mRNA hydrolase (DCP2) of Pongo abelii (Sumatran orangutan).